A 472-amino-acid chain; its full sequence is Mitochondrial substrate carrier family protein C (472 aa).

Topologically, residues 1-189 (MVLNENDKEF…ASSLRNTITY (189 aa)) are mitochondrial intermembrane. 4 consecutive EF-hand domains span residues 6-41 (NDKEFVKKLFDSLDKDNNGKLTREEIKEGFFKLRIP), 42-70 (SSEKDIESFLTNVDKDKDGSVSFKEFEDF), 73-108 (ENIKKLKIVFEELDTNKSGTLDIHEIEESIKKLNIP), and 110-145 (YSEQELIRLFHRIDKNRDNQIDFNEWRELLVLLPNS). 20 residues coordinate Ca(2+): Asp19, Asp21, Asn23, Lys25, Glu30, Asp55, Asp57, Asp59, Ser61, Glu66, Asp86, Asn88, Ser90, Thr92, Glu97, Asp123, Asn125, Asp127, Gln129, and Glu134. Solcar repeat units follow at residues 184-268 (RNTI…VKKL), 276-362 (LTSA…LKHK), and 375-461 (GQLL…FKKA). The chain crosses the membrane as a helical span at residues 190-207 (MLAGSVAGFASRTSTAPL). Topologically, residues 208–242 (ERVKIMCQLNHGKPISLISAFKACYKDGGIKGFFR) are mitochondrial matrix. A helical transmembrane segment spans residues 243–263 (GNLANIIKVSPESAVKFGTYE). Over 264–281 (YVKKLFAENDCELTSAQR) the chain is Mitochondrial intermembrane. The chain crosses the membrane as a helical span at residues 282–302 (FISGSVAGVVSHTTLFPLEVV). Over 303 to 330 (RLRLSAEIAGTYNGIFDCFKKIAISEKS) the chain is Mitochondrial matrix. The helical transmembrane segment at 331–351 (IRPFYRGLGASITATIPHSGV) threads the bilayer. Topologically, residues 352-377 (NMMVYEFLKHKVIKMTGNEFPTAGQL) are mitochondrial intermembrane. The chain crosses the membrane as a helical span at residues 378 to 398 (LVCASTSSVCGQLVGYPFHVV). Residues 399-441 (KSRLITQGSSVNQEKYTGLFDGLTKIIKKEGPIGLYKGIVPSF) lie on the Mitochondrial matrix side of the membrane. The chain crosses the membrane as a helical span at residues 442–462 (MKSIPSHSITFIVYEGFKKAF). Residues 463–472 (DVNLKEKKHH) are Mitochondrial intermembrane-facing.

Belongs to the mitochondrial carrier (TC 2.A.29) family.

The protein resides in the mitochondrion inner membrane. Functionally, calcium-dependent mitochondrial solute carrier. Mitochondrial solute carriers shuttle metabolites, nucleotides, and cofactors through the mitochondrial inner membrane. The sequence is that of Mitochondrial substrate carrier family protein C (mcfC) from Dictyostelium discoideum (Social amoeba).